A 773-amino-acid chain; its full sequence is MKFNRLMALLFGVSSPLYALDQTAVNWLGQNLDVKYTLLDTKPTTCPKAQQKCYYSELSFSVRKENTKANNDFAIFFSQLMPIYHVEGDNFAITHINGDIHKITPAAGFSGFSSAPTTVRFYTKDSQVTRSEVYAKLCCERTRSLKLTPQVIKSTQTQRDNDTGLDCNLNLTPFVTLNQLQTSSKDDTPWMGSEYLYQHQVKPTLDAAIGLIPKPKQLTVLSDKRLNLAAGINLQLSGISADAIAMAQQRLNTLGVKSTKEGLVVNVAVKPNKQSSPHYQLTVAENNISIQGNNSAAAFYALQSLAGLLDINDLRIPMVDIIDTPRYDFRGLHVDVARNFRSKAFILQTIEQMAAYKLNKLHLHLADDEGWRLAIDGLDELTSVGAYRCFDLTETRCLLPQLGAGNDKNAQVNGFYSAEDYIEILRYAKAHHIEVLPSLDMPGHSRAAIIAMEARYKKLMAQGKPEDAQKYRLVETADKTRYSSIQHYNDNTLNVCIANTYTFIDKVLSEVKVLHDRAGVPLNTYHIGADETAVLWLESPACKKLQASVKDFTNFNGYFIERVAKLLDKKGIQVAGWSDGLGDVRAANMPANIQSNGLGDIKRKRAPVAHRFANQGWQVVLSSPDVTYFDFPYQSHPEERGNHWASRAIESKKMFEFMPDNLPAHAEIWKNTNNHAYIANDSDSSLNKGVQFAGLQGHLWSEMLRSDAQAEYMLYPRLLALAERAWHHAEWELPYQAGRIYSQSSGYFTAKLQAQREADWQRFVAILGNSRTT.

The N-terminal stretch at 1–19 is a signal peptide; it reads MKFNRLMALLFGVSSPLYA. 3 cysteine pairs are disulfide-bonded: Cys46-Cys53, Cys389-Cys397, and Cys496-Cys542. Residue Glu531 is the Proton donor of the active site.

The protein belongs to the glycosyl hydrolase 20 family.

The catalysed reaction is Hydrolysis of terminal non-reducing N-acetyl-D-hexosamine residues in N-acetyl-beta-D-hexosaminides.. The polypeptide is Beta-hexosaminidase B (nag096) (Pseudoalteromonas piscicida).